A 592-amino-acid polypeptide reads, in one-letter code: Aspartate--tRNA ligase (592 aa).

Glu173 is an L-aspartate binding site. The tract at residues 197-200 (QLFK) is aspartate. Arg219 contacts L-aspartate. ATP-binding positions include 219–221 (RDE) and Gln228. His449 provides a ligand contact to L-aspartate. Glu483 serves as a coordination point for ATP. Arg490 serves as a coordination point for L-aspartate. 535-538 (GLDR) contributes to the ATP binding site.

Belongs to the class-II aminoacyl-tRNA synthetase family. Type 1 subfamily. Homodimer.

The protein resides in the cytoplasm. It carries out the reaction tRNA(Asp) + L-aspartate + ATP = L-aspartyl-tRNA(Asp) + AMP + diphosphate. Its function is as follows. Catalyzes the attachment of L-aspartate to tRNA(Asp) in a two-step reaction: L-aspartate is first activated by ATP to form Asp-AMP and then transferred to the acceptor end of tRNA(Asp). The sequence is that of Aspartate--tRNA ligase from Shewanella loihica (strain ATCC BAA-1088 / PV-4).